The sequence spans 248 residues: Granulin (248 aa).

This sequence belongs to the polyhedrin family.

Functionally, component of the virus occlusion bodies, which are large proteinaceous structures, that protect the virus from the outside environment for extended periods until they are ingested by insect larvae. In Cydia pomonella (Codling moth), this protein is Granulin.